The sequence spans 308 residues: UPF0282 protein M1425_2116 (308 aa).

This sequence belongs to the UPF0282 family.

This Saccharolobus islandicus (strain M.14.25 / Kamchatka #1) (Sulfolobus islandicus) protein is UPF0282 protein M1425_2116.